Consider the following 470-residue polypeptide: MKQLSTKVTSNGHGQDSSYFLGWEEYEKNPYDEIKNPNGMIQMGLAENQLCFDLIESWLTKNPDAASLKRNGQSIFRELALFQDYHGMPEFKKAMAEFMEEIRGNRVTFDPKKIVLAAGSTSANETLMFCLAEPGDAFLLPTPYYPGFDRDLKWRTGAEIVPIHCSSSNGFQITESALQQAYQQAQKLDLKVKGVLVTNPSNPLGTALTRRELNLLVDFITSKNIHLISDEIYSGTMFGFEQFISVMDVLKDKKLEDTEVSKRVHVVYSLSKDLGLPGFRVGAIYSNDEMIVSAATKMSSFGLVSSQTQYLLSALLSDKKFTSQYLEENQKRLKSRQRRLVSGLESAGITCLRSNAGLFCWVDMRHLLDTNTFEAELDLWKKIVYNVKLNISPGSSCHCTEPGWFRVCFANMSEDTLDLALKRLKTFVESTDCGRMISRSSHERLKSLRKKTVSNWVFRVSWTDRVPDER.

Substrate-binding residues include E47 and Y85. K272 carries the N6-(pyridoxal phosphate)lysine modification. Residue S461 is modified to Phosphoserine.

Belongs to the class-I pyridoxal-phosphate-dependent aminotransferase family. Homodimer and heterodimer. In vivo, the relevance of heterodimerization with other ACS enzymes is however unsure. Interacts (via its C-terminal region) with FEI1, FEI2, ETO1, EOL1 and EOL2. Interacts with GRF3. Pyridoxal 5'-phosphate is required as a cofactor. May be processed at its C-terminus. Post-translationally, ubiquitinated. The interaction with ETO1 (and possibly EOL1 and EOL2) mediate its proteasome-dependent degradation. Its stability and degradation plays a central role in ethylene biosynthesis. In terms of tissue distribution, expressed in roots and siliques.

It carries out the reaction S-adenosyl-L-methionine = 1-aminocyclopropane-1-carboxylate + S-methyl-5'-thioadenosine + H(+). Its pathway is alkene biosynthesis; ethylene biosynthesis via S-adenosyl-L-methionine; ethylene from S-adenosyl-L-methionine: step 1/2. In terms of biological role, 1-aminocyclopropane-1-carboxylate synthase (ACS) enzymes catalyze the conversion of S-adenosyl-L-methionine (SAM) into 1-aminocyclopropane-1-carboxylate (ACC), a direct precursor of ethylene. This Arabidopsis thaliana (Mouse-ear cress) protein is 1-aminocyclopropane-1-carboxylate synthase 5 (ACS5).